Reading from the N-terminus, the 116-residue chain is MTYVVTDECVKCKYTDCVEVCPVDCFYEGEREDDFMLVINPDECIDCGVCVPDCPIGAIKPESPGLIEWVERAKDFIENKGWKNITKKKTALPDADKFKDEKDKFNKYIGSVKIAN.

2 4Fe-4S ferredoxin-type domains span residues 2-31 and 35-64; these read TYVVTDECVKCKYTDCVEVCPVDCFYEGER and FMLVINPDECIDCGVCVPDCPIGAIKPESP. Residues Cys9 and Cys17 each contribute to the [3Fe-4S] cluster site. The [4Fe-4S] cluster site is built by Cys21, Cys44, Cys47, and Cys50. Residue Cys54 participates in [3Fe-4S] cluster binding.

It depends on [4Fe-4S] cluster as a cofactor. [3Fe-4S] cluster is required as a cofactor.

Functionally, ferredoxins are iron-sulfur proteins that transfer electrons in a wide variety of metabolic reactions. This chain is Ferredoxin (fdxA), found in Rickettsia conorii (strain ATCC VR-613 / Malish 7).